Consider the following 604-residue polypeptide: MSVEVDKSSHSKPKIEKKSKRNKRKWLNDENKTHVTASEAAIERLKKSASFSQAAQQALKQSRKEDNERDIEMQDVDAEAQPHDLLPIPQPSVEDFVDSKPHVKNITSVLPKWLAEPITVDPNTTVEFSSLNISSKLVERLQKQNITRGFAVQAAVLPLLLQDGRHGPMYSYGGDVCVSAATGSGKTLSYVIPIVQCLSHRTVPRLRCVVIVPTRELTVQVAKTFEYYMSGAGLQVCAWTGQKSLRHETYQLNGDENECRIDVLVSTPGRLVDHIRNDESFSLQHLRYMVIDEADRLLDQSFQDWVDTVMMEISHPKCLQNKSNILDLDQNISPTFLPDIDTLLPYRLPSPLQKLVFSATLTRDPSKIASLKLHNPRLVLVQNKDMEVDDGGEIEDDAIVFSVPPTLQEYHVSVSSEKPILLYHLIHSKNLTNILCFVKSNEAAARLHRLLELIHESLNQSFSCGLFTSSLSRDERKKIISRFATGDLNLLVCSDLMARGIDVANTQNVINYDPPLSVRSYVHRIGRTARAGREGFAWTLVQSHEGHHFSKLVKQLRRTLPIKRIKIEFSHISEEFVVAYDKALEALRVEVFNSRYPQQKSFLT.

The segment covering methionine 1–glutamate 16 has biased composition (basic and acidic residues). Disordered regions lie at residues methionine 1–alanine 37 and phenylalanine 51–aspartate 70. Positions phenylalanine 51–lysine 60 are enriched in low complexity. Positions glycine 149–leucine 157 match the Q motif motif. A Helicase ATP-binding domain is found at glycine 167–valine 379. Alanine 180 to threonine 187 serves as a coordination point for ATP. The DEAD box motif lies at aspartate 292–aspartate 295. The Helicase C-terminal domain occupies threonine 406 to serine 573.

This sequence belongs to the DEAD box helicase family. DDX51/DBP6 subfamily. As to quaternary structure, associated with pre-ribosomal particles.

The protein localises to the nucleus. Its subcellular location is the nucleolus. The catalysed reaction is ATP + H2O = ADP + phosphate + H(+). In terms of biological role, ATP-binding RNA helicase involved in the biogenesis of 60S ribosomal subunits and is required for the normal formation of 25S and 5.8S rRNAs. The sequence is that of ATP-dependent RNA helicase dbp6 (dbp6) from Schizosaccharomyces pombe (strain 972 / ATCC 24843) (Fission yeast).